A 331-amino-acid chain; its full sequence is Very-long-chain 3-oxoacyl-CoA reductase (331 aa).

Residues valine 15–leucine 35 form a helical membrane-spanning segment. NADP(+)-binding residues include valine 60, aspartate 115, aspartate 123, asparagine 142, tyrosine 209, lysine 213, isoleucine 242, and serine 244. Tyrosine 209 functions as the Proton donor in the catalytic mechanism. Residue lysine 213 is the Lowers pKa of active site Tyr of the active site.

It belongs to the short-chain dehydrogenases/reductases (SDR) family.

It is found in the endoplasmic reticulum membrane. The catalysed reaction is a very-long-chain (3R)-3-hydroxyacyl-CoA + NADP(+) = a very-long-chain 3-oxoacyl-CoA + NADPH + H(+). It functions in the pathway lipid metabolism; fatty acid biosynthesis. Functionally, component of the microsomal membrane bound fatty acid elongation system, which produces the 26-carbon very long-chain fatty acids (VLCFA) from palmitate. Catalyzes the reduction of the 3-ketoacyl-CoA intermediate that is formed in each cycle of fatty acid elongation. VLCFAs serve as precursors for ceramide and sphingolipids. The chain is Very-long-chain 3-oxoacyl-CoA reductase from Pyricularia oryzae (strain 70-15 / ATCC MYA-4617 / FGSC 8958) (Rice blast fungus).